The following is a 234-amino-acid chain: MTPSEQNIDKEELAKFSDLAQDWWNPAGKMKPLHLINPVRLKYIEQQITLKGKHVLDVGCGGGLLSEALAKHGAIVTGVDMSESLIDVAKNHAEQQQLNINYQCQDIEILTKDAQRFDIITCMELLEHVPDPQRMIKNCAALIKPGGKLFFSTINRNFKAYLYTIVGAEYVFNLLPKGTHDYAQFIHPSELTQWAESGGLRLLDITGIHYHPLKNEFDLSRDVSVNYLACFTHE.

The S-adenosyl-L-methionine site is built by arginine 40, glycine 59, aspartate 80, and methionine 123.

It belongs to the methyltransferase superfamily. UbiG/COQ3 family.

The catalysed reaction is a 3-demethylubiquinol + S-adenosyl-L-methionine = a ubiquinol + S-adenosyl-L-homocysteine + H(+). It catalyses the reaction a 3-(all-trans-polyprenyl)benzene-1,2-diol + S-adenosyl-L-methionine = a 2-methoxy-6-(all-trans-polyprenyl)phenol + S-adenosyl-L-homocysteine + H(+). Its pathway is cofactor biosynthesis; ubiquinone biosynthesis. O-methyltransferase that catalyzes the 2 O-methylation steps in the ubiquinone biosynthetic pathway. The protein is Ubiquinone biosynthesis O-methyltransferase of Coxiella burnetii (strain Dugway 5J108-111).